The following is a 311-amino-acid chain: 4-hydroxy-tetrahydrodipicolinate synthase (311 aa).

Pyruvate is bound at residue Thr49. Tyr138 acts as the Proton donor/acceptor in catalysis. Lys166 (schiff-base intermediate with substrate) is an active-site residue. Ile207 is a pyruvate binding site.

This sequence belongs to the DapA family. In terms of assembly, homotetramer; dimer of dimers.

Its subcellular location is the cytoplasm. It catalyses the reaction L-aspartate 4-semialdehyde + pyruvate = (2S,4S)-4-hydroxy-2,3,4,5-tetrahydrodipicolinate + H2O + H(+). The protein operates within amino-acid biosynthesis; L-lysine biosynthesis via DAP pathway; (S)-tetrahydrodipicolinate from L-aspartate: step 3/4. Catalyzes the condensation of (S)-aspartate-beta-semialdehyde [(S)-ASA] and pyruvate to 4-hydroxy-tetrahydrodipicolinate (HTPA). This Lactobacillus acidophilus (strain ATCC 700396 / NCK56 / N2 / NCFM) protein is 4-hydroxy-tetrahydrodipicolinate synthase.